Consider the following 158-residue polypeptide: Transcription factor BTF3 homolog 4 (158 aa).

The NAC-A/B domain occupies T33–L98. The segment at L125–N158 is disordered. Acidic residues predominate over residues D134 to D150.

This sequence belongs to the NAC-beta family.

The sequence is that of Transcription factor BTF3 homolog 4 (btf3l4) from Danio rerio (Zebrafish).